The following is a 364-amino-acid chain: Chorismate synthase (364 aa).

Residues R48 and R54 each contribute to the NADP(+) site. Residues 125-127 (RSS), G282, 297-301 (KPPAS), and R323 contribute to the FMN site.

It belongs to the chorismate synthase family. Homotetramer. Requires FMNH2 as cofactor.

The catalysed reaction is 5-O-(1-carboxyvinyl)-3-phosphoshikimate = chorismate + phosphate. It participates in metabolic intermediate biosynthesis; chorismate biosynthesis; chorismate from D-erythrose 4-phosphate and phosphoenolpyruvate: step 7/7. Functionally, catalyzes the anti-1,4-elimination of the C-3 phosphate and the C-6 proR hydrogen from 5-enolpyruvylshikimate-3-phosphate (EPSP) to yield chorismate, which is the branch point compound that serves as the starting substrate for the three terminal pathways of aromatic amino acid biosynthesis. This reaction introduces a second double bond into the aromatic ring system. The sequence is that of Chorismate synthase from Chloroflexus aggregans (strain MD-66 / DSM 9485).